The primary structure comprises 301 residues: MKLEGVIAATVTPFTKDGVNYEGLRIILSRIVEAGYHGVFPTSSTGEVTKLTPEERVKVMEVAKEVAGGKALVIAGTGTGDHLSTIDMVRRYKDVGVDVVLITPPYYIQYDWAAIYAFYKKVLDKTDVPVILYTIPLATGYNIPVEVFELVANEYSQVVGVKDSSGDFRYHLDLIYLLGRRLSVLQGLDMLFVPSLIMGAHGGILAGPNFLGKTTLEQYRLVKEGKTAEAVSLHNKLMPLWRFMGGCGLVGKLGGKWPTLYKLATQLVHGIDMGPPREPLPPVEDKDRKELEKILKELGLI.

Residues Ser-44 and Tyr-107 each act as charge relay system in the active site. Tyr-133 functions as the Proton donor in the catalytic mechanism. The active-site Schiff-base intermediate with substrate is Lys-162.

The protein belongs to the DapA family. In terms of assembly, homotetramer.

The protein localises to the cytoplasm. This is an uncharacterized protein from Pyrobaculum arsenaticum (strain DSM 13514 / JCM 11321 / PZ6).